A 322-amino-acid chain; its full sequence is Protein-methionine-sulfoxide reductase catalytic subunit MsrP (322 aa).

The segment at residues 1-59 (MSFRDALNLPSSEITDESVYRDRRRLLQLLALTPALGVAGCAEADPPPPPKTVVTPAQA) is a signal peptide (tat-type signal). Residues Asn-79, 82–83 (YE), Cys-137, Thr-172, Asn-220, Arg-225, and 236–238 (SIK) each bind Mo-molybdopterin.

Belongs to the MsrP family. As to quaternary structure, heterodimer of a catalytic subunit (MsrP) and a heme-binding subunit (MsrQ). Requires Mo-molybdopterin as cofactor. Predicted to be exported by the Tat system. The position of the signal peptide cleavage has not been experimentally proven.

The protein localises to the periplasm. The enzyme catalyses L-methionyl-[protein] + a quinone + H2O = L-methionyl-(S)-S-oxide-[protein] + a quinol. The catalysed reaction is L-methionyl-[protein] + a quinone + H2O = L-methionyl-(R)-S-oxide-[protein] + a quinol. Functionally, part of the MsrPQ system that repairs oxidized periplasmic proteins containing methionine sulfoxide residues (Met-O), using respiratory chain electrons. Thus protects these proteins from oxidative-stress damage caused by reactive species of oxygen and chlorine generated by the host defense mechanisms. MsrPQ is essential for the maintenance of envelope integrity under bleach stress, rescuing a wide series of structurally unrelated periplasmic proteins from methionine oxidation. The catalytic subunit MsrP is non-stereospecific, being able to reduce both (R-) and (S-) diastereoisomers of methionine sulfoxide. This chain is Protein-methionine-sulfoxide reductase catalytic subunit MsrP, found in Xanthomonas axonopodis pv. citri (strain 306).